The sequence spans 607 residues: Terpenoid synthase 29 (607 aa).

Asp358, Asp362, Asn502, Thr506, and Glu510 together coordinate Mg(2+). Residues 358–362 (DDTYD) carry the DDXXD motif motif.

It belongs to the terpene synthase family. Tpsa subfamily. Mg(2+) is required as a cofactor. The cofactor is Mn(2+). Predominantly expressed in flowers but also in siliques, roots, leaves and stems.

It localises to the cytoplasm. It participates in secondary metabolite biosynthesis; terpenoid biosynthesis. The sequence is that of Terpenoid synthase 29 (TPS29) from Arabidopsis thaliana (Mouse-ear cress).